We begin with the raw amino-acid sequence, 530 residues long: ATP synthase subunit alpha (530 aa).

172–179 (GDRQTGKT) lines the ATP pocket.

This sequence belongs to the ATPase alpha/beta chains family. F-type ATPases have 2 components, CF(1) - the catalytic core - and CF(0) - the membrane proton channel. CF(1) has five subunits: alpha(3), beta(3), gamma(1), delta(1), epsilon(1). CF(0) has three main subunits: a(1), b(2) and c(9-12). The alpha and beta chains form an alternating ring which encloses part of the gamma chain. CF(1) is attached to CF(0) by a central stalk formed by the gamma and epsilon chains, while a peripheral stalk is formed by the delta and b chains.

The protein resides in the cell inner membrane. It carries out the reaction ATP + H2O + 4 H(+)(in) = ADP + phosphate + 5 H(+)(out). In terms of biological role, produces ATP from ADP in the presence of a proton gradient across the membrane. The alpha chain is a regulatory subunit. In Phocaeicola vulgatus (strain ATCC 8482 / DSM 1447 / JCM 5826 / CCUG 4940 / NBRC 14291 / NCTC 11154) (Bacteroides vulgatus), this protein is ATP synthase subunit alpha.